The primary structure comprises 418 residues: MSVAEQIRTIAAEARQASFAMAKLSSAAKDQLLLDMALALINAAPHIIEENKKDLEAGQKRGLSAAMLDRLMLDEARVKGMADAIREVAQLPDPVGEVTGMWKRPNDLMVGKMRIPLGVIGIIYESRPNVTSDAAALCLKSGNAVVLRGGSEAIHSNLAIATILKAQLAKHGIPAAALSLIPFVEREGVTEMLKQEEFIDVIIPRGGESLIRFVVENSKIPVIKHYKGVCHIFVDATADFEMAREIIVNAKTQRPGVCNALETLLIHKDIAETFVPFIYEALTTLKVELRGDKTFRQFAPKAAKATEEDWYAEYLELILAAAVVDGLDAAIDHINRYSSLHTESIITGDYANSQRFIREVNSGVVMVNASTRFSDGNQLGLGAEIGISTTKLHSFGPMGLTDLTTTKFIVYGSGQVRP.

Belongs to the gamma-glutamyl phosphate reductase family.

It is found in the cytoplasm. It catalyses the reaction L-glutamate 5-semialdehyde + phosphate + NADP(+) = L-glutamyl 5-phosphate + NADPH + H(+). Its pathway is amino-acid biosynthesis; L-proline biosynthesis; L-glutamate 5-semialdehyde from L-glutamate: step 2/2. Its function is as follows. Catalyzes the NADPH-dependent reduction of L-glutamate 5-phosphate into L-glutamate 5-semialdehyde and phosphate. The product spontaneously undergoes cyclization to form 1-pyrroline-5-carboxylate. The chain is Gamma-glutamyl phosphate reductase from Geobacter sp. (strain M21).